Here is a 203-residue protein sequence, read N- to C-terminus: GTP cyclohydrolase 1 (203 aa).

3 residues coordinate Zn(2+): Cys-87, His-90, and Cys-158.

It belongs to the GTP cyclohydrolase I family. Toroid-shaped homodecamer, composed of two pentamers of five dimers.

The enzyme catalyses GTP + H2O = 7,8-dihydroneopterin 3'-triphosphate + formate + H(+). The protein operates within cofactor biosynthesis; 7,8-dihydroneopterin triphosphate biosynthesis; 7,8-dihydroneopterin triphosphate from GTP: step 1/1. This is GTP cyclohydrolase 1 from Xylella fastidiosa (strain 9a5c).